The chain runs to 511 residues: Ribose import ATP-binding protein RbsA 3 (511 aa).

2 consecutive ABC transporter domains span residues 21 to 257 and 256 to 511; these read LEMR…VGRD and RDVE…TGNA. 53 to 60 provides a ligand contact to ATP; the sequence is GENGAGKS.

It belongs to the ABC transporter superfamily. Ribose importer (TC 3.A.1.2.1) family. In terms of assembly, the complex is composed of an ATP-binding protein (RbsA), two transmembrane proteins (RbsC) and a solute-binding protein (RbsB).

Its subcellular location is the cell inner membrane. The catalysed reaction is D-ribose(out) + ATP + H2O = D-ribose(in) + ADP + phosphate + H(+). Part of the ABC transporter complex RbsABC involved in ribose import. Responsible for energy coupling to the transport system. The chain is Ribose import ATP-binding protein RbsA 3 from Rhizobium etli (strain ATCC 51251 / DSM 11541 / JCM 21823 / NBRC 15573 / CFN 42).